A 229-amino-acid chain; its full sequence is MPKHGKRYRALLEKVDPNKVYTIDEAARLVKELATAKFDETVEVHAKLGIDPRRSDQNVRGTVSLPHGLGKQVRVLAIAKGEKIKEAEEAGADYVGGEEIIQKILDGWMDFDAVVATPDVMGAVGSKLGRILGPRGLLPNPKAGTVGFNIGEIIREIKAGRIEFRNDKTGAIHAPVGKASFPPEKLADNIRAFIRALEAHKPEGAKGTFLRSVYVTTTMGPSVRINPHS.

Part of the 50S ribosomal subunit.

In terms of biological role, directly binds to 23S rRNA. Forms what is known as the L1 stalk, which protrudes beyond the 70S ribosome surface. The stalk is preferentially stabilized in 70S versus 50S crystals. Interacts with the E site tRNA, blocking the exit path. This blockage implies that this section of the ribosome must be able to move to release the deacetylated tRNA. Its function is as follows. Protein L1 is also a translational repressor protein, it controls the translation of the L11 operon by binding to its mRNA. The polypeptide is Large ribosomal subunit protein uL1 (rplA) (Thermus thermophilus (strain ATCC 27634 / DSM 579 / HB8)).